Consider the following 245-residue polypeptide: tRNA (guanine-N(1)-)-methyltransferase (245 aa).

S-adenosyl-L-methionine is bound by residues G113 and 133–138 (IGDYVL).

The protein belongs to the RNA methyltransferase TrmD family. As to quaternary structure, homodimer.

It is found in the cytoplasm. The enzyme catalyses guanosine(37) in tRNA + S-adenosyl-L-methionine = N(1)-methylguanosine(37) in tRNA + S-adenosyl-L-homocysteine + H(+). In terms of biological role, specifically methylates guanosine-37 in various tRNAs. In Oceanobacillus iheyensis (strain DSM 14371 / CIP 107618 / JCM 11309 / KCTC 3954 / HTE831), this protein is tRNA (guanine-N(1)-)-methyltransferase.